The primary structure comprises 287 residues: Putative syntaxin-4 (287 aa).

Over 1–262 (MHQISGINAA…NRKWKIVTCI (262 aa)) the chain is Cytoplasmic. Residues 65–97 (KCRKLNDHVDKFIAQARGIRRRLADASEELVQY) are a coiled coil. In terms of domain architecture, t-SNARE coiled-coil homology spans 184–246 (FDDMKNRATD…EQAQQNVRQA (63 aa)). A helical; Anchor for type IV membrane protein membrane pass occupies residues 263 to 283 (ALIVLLLVVVYLLSHFLGAII). Residues 284–287 (PGWK) lie on the Extracellular side of the membrane.

It belongs to the syntaxin family.

It localises to the membrane. Functionally, potentially involved in docking of synaptic vesicles at presynaptic active zones. The polypeptide is Putative syntaxin-4 (syx-4) (Caenorhabditis elegans).